Reading from the N-terminus, the 34-residue chain is Photosystem I reaction center subunit XII (34 aa).

A helical transmembrane segment spans residues 4–24; sequence VLSAPEVFIALVVAAHAAVLA.

The protein belongs to the PsaM family.

It localises to the cellular thylakoid membrane. This chain is Photosystem I reaction center subunit XII, found in Synechococcus sp. (strain CC9605).